The primary structure comprises 156 residues: 16 kDa phloem protein 1 (156 aa).

The region spanning 1–108 is the C2 domain; that stretch reads MAVGILEVSL…LEMGVEKGTA (108 aa). Ca(2+) contacts are provided by aspartate 20, aspartate 26, aspartate 78, aspartate 80, serine 83, and aspartate 86.

Requires Ca(2+) as cofactor.

In terms of biological role, binds to both sense and antisense RNA. Can also bind sheared DNA and dodecamer DNA with a low affinity. Interacts with mesophyll plasmodesmata to mediate its own cell-to-cell transport and potentiate RNA trafficking. May play a role in plant defense signaling. The protein is 16 kDa phloem protein 1 of Arabidopsis thaliana (Mouse-ear cress).